The following is a 372-amino-acid chain: Probable dual-specificity RNA methyltransferase RlmN (372 aa).

The active-site Proton acceptor is the Glu106. The 248-residue stretch at Tyr112 to Arg359 folds into the Radical SAM core domain. A disulfide bridge connects residues Cys119 and Cys365. 3 residues coordinate [4Fe-4S] cluster: Cys126, Cys130, and Cys133. S-adenosyl-L-methionine-binding positions include Gly186–Glu187, Ser220, Ser243–His245, and Asn322. Cys365 functions as the S-methylcysteine intermediate in the catalytic mechanism.

This sequence belongs to the radical SAM superfamily. RlmN family. [4Fe-4S] cluster is required as a cofactor.

It is found in the cytoplasm. The catalysed reaction is adenosine(2503) in 23S rRNA + 2 reduced [2Fe-2S]-[ferredoxin] + 2 S-adenosyl-L-methionine = 2-methyladenosine(2503) in 23S rRNA + 5'-deoxyadenosine + L-methionine + 2 oxidized [2Fe-2S]-[ferredoxin] + S-adenosyl-L-homocysteine. It carries out the reaction adenosine(37) in tRNA + 2 reduced [2Fe-2S]-[ferredoxin] + 2 S-adenosyl-L-methionine = 2-methyladenosine(37) in tRNA + 5'-deoxyadenosine + L-methionine + 2 oxidized [2Fe-2S]-[ferredoxin] + S-adenosyl-L-homocysteine. Its function is as follows. Specifically methylates position 2 of adenine 2503 in 23S rRNA and position 2 of adenine 37 in tRNAs. In Mycolicibacterium smegmatis (strain ATCC 700084 / mc(2)155) (Mycobacterium smegmatis), this protein is Probable dual-specificity RNA methyltransferase RlmN.